The primary structure comprises 104 residues: Protein RnfH (104 aa).

Belongs to the UPF0125 (RnfH) family.

In Pseudomonas fluorescens (strain Pf0-1), this protein is Protein RnfH.